The following is a 127-amino-acid chain: Prophage antitermination protein Q homolog QuuD (127 aa).

This sequence belongs to the phage antitermination Q type 1 family.

In terms of biological role, positively regulate expression of some phage genes. Bacterial host RNA polymerase modified by antitermination proteins transcribes through termination sites that otherwise prevent expression of the regulated genes. The polypeptide is Prophage antitermination protein Q homolog QuuD (quuD) (Escherichia coli (strain K12)).